We begin with the raw amino-acid sequence, 558 residues long: Phosphatidylserine lipase ABHD16A (558 aa).

2 helical membrane-spanning segments follow: residues 60–80 (ILAL…FAFF) and 93–113 (VVPF…VACL). The Cytoplasmic portion of the chain corresponds to 114-558 (RGIGRWTNPQ…AQNFQMPWHL (445 aa)). The AB hydrolase-1 domain maps to 281–407 (LVICCEGNAG…LVTRTVRQHL (127 aa)). Catalysis depends on charge relay system residues Ser355, Asp430, and His507.

It belongs to the AB hydrolase superfamily. ABHD16 family.

It is found in the membrane. The enzyme catalyses 1-heptadecanoyl-2-(5Z,8Z,11Z,14Z-eicosatetraenoyl)-sn-glycero-3-phosphoserine + H2O = 1-heptadecanoyl-sn-glycero-3-phosphoserine + (5Z,8Z,11Z,14Z)-eicosatetraenoate + H(+). It catalyses the reaction 1-hexadecanoyl-2-(9Z-octadecenoyl)-sn-glycero-3-phospho-L-serine + H2O = 1-hexadecanoyl-sn-glycero-3-phospho-L-serine + (9Z)-octadecenoate + H(+). It carries out the reaction 1-octadecanoyl-2-(9Z,12Z-octadecadienoyl)-sn-glycero-3-phosphoserine + H2O = 1-octadecanoyl-sn-glycero-3-phosphoserine + (9Z,12Z)-octadecadienoate + H(+). The catalysed reaction is 1-heptadecanoyl-2-(5Z,8Z,11Z,14Z-eicosatetraenoyl)-sn-glycero-3-phosphocholine + H2O = 1-heptadecanoyl-sn-glycero-3-phosphocholine + (5Z,8Z,11Z,14Z)-eicosatetraenoate + H(+). The enzyme catalyses 1-hexadecanoyl-2-(9Z-octadecenoyl)-sn-glycero-3-phosphoglycerol + H2O = 1-hexadecanoyl-sn-glycero-3-phosphoglycerol + (9Z)-octadecenoate + H(+). It catalyses the reaction 1-hexadecanoyl-2-(9Z-octadecenoyl)-sn-glycero-3-phospho-(1D-myo-inositol) + H2O = 1-hexadecanoyl-sn-glycero-3-phospho-(1D-myo-inositol) + (9Z)-octadecenoate + H(+). It carries out the reaction 1-heptadecanoyl-2-(5Z,8Z,11Z,14Z-eicosatetraenoyl)-sn-glycero-3-phosphoethanolamine + H2O = 1-heptadecanoyl-sn-glycero-3-phosphoethanolamine + (5Z,8Z,11Z,14Z)-eicosatetraenoate + H(+). The catalysed reaction is 1-hexadecanoyl-2-(9Z-octadecenoyl)-sn-glycero-3-phospho-(1'-sn-glycerol) + H2O = 1-hexadecanoyl-sn-glycero-3-phospho-(1'-sn-glycerol) + (9Z)-octadecenoate + H(+). The enzyme catalyses Hydrolyzes glycerol monoesters of long-chain fatty acids.. It catalyses the reaction 1-tetradecanoylglycerol + H2O = tetradecanoate + glycerol + H(+). It carries out the reaction 2-hexadecanoylglycerol + H2O = glycerol + hexadecanoate + H(+). The catalysed reaction is 1-(9Z-octadecenoyl)-glycerol + H2O = glycerol + (9Z)-octadecenoate + H(+). The enzyme catalyses 2-(9Z-octadecenoyl)-glycerol + H2O = glycerol + (9Z)-octadecenoate + H(+). It catalyses the reaction 2-(9Z,12Z-octadecadienoyl)-glycerol + H2O = (9Z,12Z)-octadecadienoate + glycerol + H(+). It carries out the reaction 1-(5Z,8Z,11Z,14Z-eicosatetraenoyl)-glycerol + H2O = glycerol + (5Z,8Z,11Z,14Z)-eicosatetraenoate + H(+). The catalysed reaction is 2-(5Z,8Z,11Z,14Z-eicosatetraenoyl)-glycerol + H2O = glycerol + (5Z,8Z,11Z,14Z)-eicosatetraenoate + H(+). The enzyme catalyses prostaglandin D2-1-glycerol ester + H2O = prostaglandin D2 + glycerol + H(+). It catalyses the reaction 2-glyceryl-15-deoxy-Delta(12,14)-prostaglandin J2 + H2O = 15-deoxy-Delta(12,14)-prostaglandin J2 + glycerol + H(+). It carries out the reaction 1-(9Z,12Z-octadecadienoyl)-glycerol + H2O = (9Z,12Z)-octadecadienoate + glycerol + H(+). Functionally, phosphatidylserine (PS) lipase that mediates the hydrolysis of phosphatidylserine to generate lysophosphatidylserine (LPS). LPS constitutes a class of signaling lipids that regulates immunological and neurological processes. Has no activity towards diacylglycerol, triacylglycerol or lysophosphatidylserine lipase. Also has monoacylglycerol lipase activity, with preference for 1-(9Z,12Z-octadecadienoyl)-glycerol (1-LG) and 2-glyceryl-15-deoxy-Delta(12,14)-prostaglandin J2 (15d-PGJ(2)-G). The chain is Phosphatidylserine lipase ABHD16A from Macaca fascicularis (Crab-eating macaque).